We begin with the raw amino-acid sequence, 150 residues long: Ribonuclease H (150 aa).

The RNase H type-1 domain maps to 3–144 (DKDMIEIWTD…ADGLARKGTD (142 aa)). Residues Asp12, Glu50, Asp72, and Asp136 each contribute to the Mg(2+) site. The tract at residues 129 to 150 (DEGNERADGLARKGTDEVRGRK) is disordered.

This sequence belongs to the RNase H family. Monomer. It depends on Mg(2+) as a cofactor.

It is found in the cytoplasm. It carries out the reaction Endonucleolytic cleavage to 5'-phosphomonoester.. Functionally, endonuclease that specifically degrades the RNA of RNA-DNA hybrids. The polypeptide is Ribonuclease H (Hyphomonas neptunium (strain ATCC 15444)).